The chain runs to 875 residues: MAAAPSHPAGLPGSPGPGSPPPPGGLDLQSPPPLLPQIPAPGSGVSFHIQIGLTREFVLLPAASELAHVKQLACSIVDQKFPECGFYGLYDKILLFKHDPTSANLLQLVRSAADIQEGDLVEVVLSASATFEDFQIRPHALTVHSYRAPAFCDHCGEMLFGLVRQGLKCDGCGLNYHKRCAFSIPNNCSGARKRRLSSTSLASGHSVRLGSSESLPCTAEELSRSTTDLLPRRPPSSSSSSSSSSFYTGRPIELDKMLMSKVKVPHTFLIHSYTRPTVCQACKKLLKGLFRQGLQCKDCKFNCHKRCATRVPNDCLGEALINGDVPMEEAADYSEADKSSISDELEDSGVIPGSHSESALHASEEEEGEGHKAQSSLGYIPLMRVVQSVRHTTRKSSTTLREGWVVHYSNKDTLRKRHYWRLDCKCITLFQNNTTNRYYKEIPLSEILAVEPAQNFSLVPPGTNPHCFEIITANVTYFVGETPGGAPGGPSGQGTEAVRGWETAIRQALMPVILQDAPSAPGHTPHRQASLSISVSNSQIQENVDIATVYQIFPDEVLGSGQFGVVYGGKHRKTGRDVAVKVIDKLRFPTKQESQLRNEVAILQSLRHPGIVNLECMFETPEKVFVVMEKLHGDMLEMILSSEKGRLPERLTKFLITQILVALRHLHFKNIVHCDLKPENVLLASADPFPQVKLCDFGFARIIGEKSFRRSVVGTPAYLAPEVLLNQGYNRSLDMWSVGVIMYVSLSGTFPFNEDEDINDQIQNAAFMYPASPWSHISSGAIDLINNLLQVKMRKRYSVDKSLSHPWLQEYQTWLDLRELEGKMGERYITHESDDARWDQFVAERHGTPAEGDLGGACLPQDHEMQGLAERISIL.

The span at 1–12 (MAAAPSHPAGLP) shows a compositional bias: low complexity. Residues 1–35 (MAAAPSHPAGLPGSPGPGSPPPPGGLDLQSPPPLL) form a disordered region. Residues 14-35 (SPGPGSPPPPGGLDLQSPPPLL) are compositionally biased toward pro residues. A Phosphoserine modification is found at Ser-30. Tyr-87 is modified (phosphotyrosine). The Phorbol-ester/DAG-type 1 zinc finger occupies 138 to 188 (PHALTVHSYRAPAFCDHCGEMLFGLVRQGLKCDGCGLNYHKRCAFSIPNNC). A phosphoserine mark is found at Ser-197, Ser-198, Ser-200, Ser-203, Ser-206, Ser-211, Ser-212, and Ser-214. The disordered stretch occupies residues 224–247 (RSTTDLLPRRPPSSSSSSSSSSFY). The segment covering 236–245 (SSSSSSSSSS) has biased composition (low complexity). At Ser-244 the chain carries Phosphoserine; by CSNK1D and CSNK1E. Ser-245 carries the phosphoserine modification. The Phorbol-ester/DAG-type 2 zinc-finger motif lies at 265–315 (PHTFLIHSYTRPTVCQACKKLLKGLFRQGLQCKDCKFNCHKRCATRVPNDC). The tract at residues 332-374 (DYSEADKSSISDELEDSGVIPGSHSESALHASEEEEGEGHKAQ) is disordered. In terms of domain architecture, PH spans 398-510 (TTLREGWVVH…WETAIRQALM (113 aa)). Tyr-408 bears the Phosphotyrosine mark. Tyr-439 carries the post-translational modification Phosphotyrosine; by ABL1. Ser-519 bears the Phosphoserine mark. A Protein kinase domain is found at 552–808 (IFPDEVLGSG…VDKSLSHPWL (257 aa)). Residues 558 to 566 (LGSGQFGVV) and Lys-581 contribute to the ATP site. The active-site Proton acceptor is the Asp-675. Residue Ser-707 is modified to Phosphoserine; by PKC. Ser-711 carries the phosphoserine; by autocatalysis modification. Tyr-718 bears the Phosphotyrosine; by ABL1 mark. Positions 725 to 727 (LNQ) match the Important for ABL1-mediated Tyr-718 phosphorylation motif. Ser-873 bears the Phosphoserine; by autocatalysis mark.

Belongs to the protein kinase superfamily. CAMK Ser/Thr protein kinase family. PKD subfamily. Interacts (via C-terminus) with LCK. Interacts (via N-terminus and zing-finger domain 1 and 2) with PRKCD in response to oxidative stress; the interaction is independent of PRKD2 tyrosine phosphorylation. Mg(2+) serves as cofactor. Post-translationally, phosphorylation of Ser-873 correlates with the activation status of the kinase. Ser-707 is probably phosphorylated by PKC. Phosphorylation at Ser-244 by CSNK1D and CSNK1E promotes nuclear localization and substrate targeting. Phosphorylation at Ser-244, Ser-707 and Ser-711 is required for nuclear localization. Phosphorylated at Tyr-438 by ABL1 in response to oxidative stress. Phosphorylated at Tyr-718 by ABL1 specifically in response to oxidative stress; requires prior phosphorylation at Ser-707 or/and Ser-711.

Its subcellular location is the cytoplasm. The protein resides in the cell membrane. It is found in the golgi apparatus. The protein localises to the trans-Golgi network. The catalysed reaction is L-seryl-[protein] + ATP = O-phospho-L-seryl-[protein] + ADP + H(+). The enzyme catalyses L-threonyl-[protein] + ATP = O-phospho-L-threonyl-[protein] + ADP + H(+). Its activity is regulated as follows. Activated by DAG and phorbol esters. Phorbol-ester/DAG-type domains bind DAG, mediating translocation to membranes. Autophosphorylation of Ser-711 and phosphorylation of Ser-707 by PKC relieves auto-inhibition by the PH domain. Catalytic activity is further increased by phosphorylation at Tyr-718 in response to oxidative stress. Functionally, serine/threonine-protein kinase that converts transient diacylglycerol (DAG) signals into prolonged physiological effects downstream of PKC, and is involved in the regulation of cell proliferation via MAPK1/3 (ERK1/2) signaling, oxidative stress-induced NF-kappa-B activation, inhibition of HDAC7 transcriptional repression, signaling downstream of T-cell antigen receptor (TCR) and cytokine production, and plays a role in Golgi membrane trafficking, angiogenesis, secretory granule release and cell adhesion. May potentiate mitogenesis induced by the neuropeptide bombesin by mediating an increase in the duration of MAPK1/3 (ERK1/2) signaling, which leads to accumulation of immediate-early gene products including FOS that stimulate cell cycle progression. In response to oxidative stress, is phosphorylated at Tyr-438 and Tyr-718 by ABL1, which leads to the activation of PRKD2 without increasing its catalytic activity, and mediates activation of NF-kappa-B. In response to the activation of the gastrin receptor CCKBR, is phosphorylated at Ser-244 by CSNK1D and CSNK1E, translocates to the nucleus, phosphorylates HDAC7, leading to nuclear export of HDAC7 and inhibition of HDAC7 transcriptional repression of NR4A1/NUR77. Upon TCR stimulation, is activated independently of ZAP70, translocates from the cytoplasm to the nucleus and is required for interleukin-2 (IL2) promoter up-regulation. During adaptive immune responses, is required in peripheral T-lymphocytes for the production of the effector cytokines IL2 and IFNG after TCR engagement and for optimal induction of antibody responses to antigens. In epithelial cells stimulated with lysophosphatidic acid (LPA), is activated through a PKC-dependent pathway and mediates LPA-stimulated interleukin-8 (IL8) secretion via a NF-kappa-B-dependent pathway. During TCR-induced T-cell activation, interacts with and is activated by the tyrosine kinase LCK, which results in the activation of the NFAT transcription factors. In the trans-Golgi network (TGN), regulates the fission of transport vesicles that are on their way to the plasma membrane and in polarized cells is involved in the transport of proteins from the TGN to the basolateral membrane. Plays an important role in endothelial cell proliferation and migration prior to angiogenesis, partly through modulation of the expression of KDR/VEGFR2 and FGFR1, two key growth factor receptors involved in angiogenesis. In secretory pathway, is required for the release of chromogranin-A (CHGA)-containing secretory granules from the TGN. Downstream of PRKCA, plays important roles in angiotensin-2-induced monocyte adhesion to endothelial cells. The protein is Serine/threonine-protein kinase D2 (Prkd2) of Mus musculus (Mouse).